A 2587-amino-acid chain; its full sequence is Protein KINKY POLLEN (2587 aa).

The N-terminal stretch at 1-27 (MAAFLVMFIFTIALFVALLWVFFKSLP) is a signal peptide. N71 is a glycosylation site (N-linked (GlcNAc...) asparagine). The tract at residues 103–124 (PSHSSKGPRKPKTRKSSSGGKG) is disordered. The segment covering 108–117 (KGPRKPKTRK) has biased composition (basic residues). 3 N-linked (GlcNAc...) asparagine glycosylation sites follow: N262, N281, and N485. Positions 270 to 290 (SKGEVIDSSSGNTTSEKPPKQ) are disordered. Polar residues predominate over residues 276–285 (DSSSGNTTSE). The disordered stretch occupies residues 589 to 611 (GSSSKNKQEKGAHRSKPPSGRGT). A coiled-coil region spans residues 691–716 (TLNKEIQSTQVELETAKAIYQEFLEE). Residues 784–814 (QHGNRNPEEASTVTGDKQKEEPTTTPNSLDK) are disordered. N-linked (GlcNAc...) asparagine glycans are attached at residues N1155, N1250, N1281, and N1486. Disordered regions lie at residues 1571–1608 (HCSKPAQMSRTSSLSGSTDRVTSDNGTSTSDGTEKHPD), 1646–1673 (VDARSTKEKQSEPEENSHSDPSDDDGYN), and 1729–1797 (EGNQ…PEEE). The span at 1576 to 1590 (AQMSRTSSLSGSTDR) shows a compositional bias: polar residues. N1595 carries N-linked (GlcNAc...) asparagine glycosylation. Over residues 1646–1666 (VDARSTKEKQSEPEENSHSDP) the composition is skewed to basic and acidic residues. Residues 1746 to 1760 (KQPSTGSGNLASQSK) show a composition bias toward polar residues. N1861, N1951, N1981, N2036, and N2278 each carry an N-linked (GlcNAc...) asparagine glycan. Residues 2006 to 2036 (IEEVELAKIELEAKERDRMMLLDDIRKLTQN) adopt a coiled-coil conformation. The span at 2274-2287 (QGSKNQSLKSSTIR) shows a compositional bias: polar residues. Disordered stretches follow at residues 2274–2299 (QGSKNQSLKSSTIRGSGRELRRTSSF), 2319–2360 (SMEH…KKSR), and 2442–2469 (KDDIGLRDKDESGRTDQESGAWVKRPGD). Basic and acidic residues-rich tracts occupy residues 2289–2299 (SGRELRRTSSF), 2322–2336 (HQGESSKGKLKDSKT), 2343–2359 (SVHEEKKGEKSLEDKKS), and 2442–2458 (KDDIGLRDKDESGRTDQ). Residues N2513 and N2544 are each glycosylated (N-linked (GlcNAc...) asparagine). The interval 2533-2587 (IRRHSKKFQNQNTTKGSKKTQLSPTLSPPKEEDQYESDSSSGSSAYEEFLDQNQI) is disordered. A compositionally biased stretch (polar residues) spans 2540 to 2557 (FQNQNTTKGSKKTQLSPT). Low complexity predominate over residues 2569–2579 (SDSSSGSSAYE).

The protein belongs to the SABRE family. As to expression, mostly expressed in pollen and roots, especially in tip-growing cells, but also present in seedlings, stems, leaves, buds, flowers, siliques and seeds.

It is found in the secreted. The protein resides in the golgi apparatus. Its function is as follows. May be involved in membrane trafficking. Required for tip growth in pollen tubes and root hairs. The chain is Protein KINKY POLLEN from Arabidopsis thaliana (Mouse-ear cress).